The chain runs to 355 residues: Protein-glutamate methylesterase/protein-glutamine glutaminase (355 aa).

A Response regulatory domain is found at 7–123; that stretch reads AAVVVDDSQF…SVGIKQQQDE (117 aa). A 4-aspartylphosphate modification is found at aspartate 57. The tract at residues 139–159 is disordered; that stretch reads TEAAAERTTSTATSTTTSRSA. Residues 161 to 355 enclose the CheB-type methylesterase domain; the sequence is EYVDKPTLVI…DGVLDTIMRE (195 aa). Residues serine 173, histidine 200, and aspartate 297 contribute to the active site.

This sequence belongs to the CheB family. Post-translationally, phosphorylated by CheA. Phosphorylation of the N-terminal regulatory domain activates the methylesterase activity.

It is found in the cytoplasm. It catalyses the reaction [protein]-L-glutamate 5-O-methyl ester + H2O = L-glutamyl-[protein] + methanol + H(+). The catalysed reaction is L-glutaminyl-[protein] + H2O = L-glutamyl-[protein] + NH4(+). Its function is as follows. Involved in chemotaxis. Part of a chemotaxis signal transduction system that modulates chemotaxis in response to various stimuli. Catalyzes the demethylation of specific methylglutamate residues introduced into the chemoreceptors (methyl-accepting chemotaxis proteins or MCP) by CheR. Also mediates the irreversible deamidation of specific glutamine residues to glutamic acid. In Natronomonas pharaonis (strain ATCC 35678 / DSM 2160 / CIP 103997 / JCM 8858 / NBRC 14720 / NCIMB 2260 / Gabara) (Halobacterium pharaonis), this protein is Protein-glutamate methylesterase/protein-glutamine glutaminase.